The primary structure comprises 139 residues: Large ribosomal subunit protein eL32 (139 aa).

The protein belongs to the eukaryotic ribosomal protein eL32 family.

The protein is Large ribosomal subunit protein eL32 (RPL32) of Encephalitozoon cuniculi (strain GB-M1) (Microsporidian parasite).